An 820-amino-acid chain; its full sequence is Pentatricopeptide repeat-containing protein At3g22150, chloroplastic (820 aa).

The interval methionine 1–isoleucine 42 is disordered. The N-terminal 50 residues, methionine 1–cysteine 50, are a transit peptide targeting the chloroplast. Positions asparagine 22–isoleucine 42 are enriched in polar residues. PPR repeat units lie at residues threonine 69–threonine 99, aspartate 106–cysteine 136, serine 141–lysine 177, asparagine 178–proline 212, serine 213–tyrosine 247, aspartate 250–valine 284, tryptophan 285–serine 316, aspartate 317–asparagine 347, proline 352–arginine 382, aspartate 383–isoleucine 417, aspartate 418–phenylalanine 452, aspartate 485–proline 519, asparagine 520–glutamine 550, asparagine 555–arginine 585, asparagine 586–proline 620, aspartate 621–valine 651, and serine 657–alanine 691. Positions leucine 693–alanine 770 are type E motif. The interval glycine 771–arginine 801 is type E(+) motif.

The protein belongs to the PPR family. PCMP-E subfamily.

It is found in the plastid. The protein localises to the chloroplast. The sequence is that of Pentatricopeptide repeat-containing protein At3g22150, chloroplastic (PCMP-E95) from Arabidopsis thaliana (Mouse-ear cress).